The primary structure comprises 473 residues: Photosystem II CP43 reaction center protein (473 aa).

The propeptide occupies 1-14 (MKTLYSLRRSYPVE). The residue at position 15 (Thr-15) is an N-acetylthreonine. The residue at position 15 (Thr-15) is a Phosphothreonine. Helical transmembrane passes span 69–93 (LFEV…PHLA), 134–155 (LIGP…KDRN), 178–200 (KALY…RKIT), 255–275 (KPFA…LSYS), and 291–312 (WFNN…ASQA). Glu-367 lines the [CaMn4O5] cluster pocket. The chain crosses the membrane as a helical span at residues 447 to 471 (RARAAAAGFEKGIDRDFEPVLSMTP).

Belongs to the PsbB/PsbC family. PsbC subfamily. In terms of assembly, PSII is composed of 1 copy each of membrane proteins PsbA, PsbB, PsbC, PsbD, PsbE, PsbF, PsbH, PsbI, PsbJ, PsbK, PsbL, PsbM, PsbT, PsbX, PsbY, PsbZ, Psb30/Ycf12, at least 3 peripheral proteins of the oxygen-evolving complex and a large number of cofactors. It forms dimeric complexes. Binds multiple chlorophylls and provides some of the ligands for the Ca-4Mn-5O cluster of the oxygen-evolving complex. It may also provide a ligand for a Cl- that is required for oxygen evolution. PSII binds additional chlorophylls, carotenoids and specific lipids. is required as a cofactor.

The protein localises to the plastid. Its subcellular location is the chloroplast thylakoid membrane. In terms of biological role, one of the components of the core complex of photosystem II (PSII). It binds chlorophyll and helps catalyze the primary light-induced photochemical processes of PSII. PSII is a light-driven water:plastoquinone oxidoreductase, using light energy to abstract electrons from H(2)O, generating O(2) and a proton gradient subsequently used for ATP formation. This is Photosystem II CP43 reaction center protein from Abies alba (Edeltanne).